A 91-amino-acid chain; its full sequence is Small ribosomal subunit protein uS15 (91 aa).

The protein belongs to the universal ribosomal protein uS15 family. Part of the 30S ribosomal subunit. Forms a bridge to the 50S subunit in the 70S ribosome, contacting the 23S rRNA.

In terms of biological role, one of the primary rRNA binding proteins, it binds directly to 16S rRNA where it helps nucleate assembly of the platform of the 30S subunit by binding and bridging several RNA helices of the 16S rRNA. Its function is as follows. Forms an intersubunit bridge (bridge B4) with the 23S rRNA of the 50S subunit in the ribosome. This Rickettsia peacockii (strain Rustic) protein is Small ribosomal subunit protein uS15.